Consider the following 480-residue polypeptide: Cytochrome b-c1 complex subunit 1, mitochondrial (480 aa).

The transit peptide at 1-34 (MAASAVCRAAGAGTRVLLRTRRSPALLRSSDLRG) directs the protein to the mitochondrion. An N6-acetyllysine mark is found at Lys-111 and Lys-138. Lys-163 carries the post-translational modification N6-acetyllysine; alternate. N6-succinyllysine; alternate is present on Lys-163. Ser-212 carries the post-translational modification Phosphoserine. Lys-248 bears the N6-acetyllysine mark.

The protein belongs to the peptidase M16 family. UQCRC1/QCR1 subfamily. As to quaternary structure, component of the ubiquinol-cytochrome c oxidoreductase (cytochrome b-c1 complex, complex III, CIII), a multisubunit enzyme composed of 11 subunits. The complex is composed of 3 respiratory subunits cytochrome b, cytochrome c1 and Rieske protein UQCRFS1, 2 core protein subunits UQCRC1/QCR1 and UQCRC2/QCR2, and 6 low-molecular weight protein subunits UQCRH/QCR6, UQCRB/QCR7, UQCRQ/QCR8, UQCR10/QCR9, UQCR11/QCR10 and subunit 9, the cleavage product of Rieske protein UQCRFS1. The complex exists as an obligatory dimer and forms supercomplexes (SCs) in the inner mitochondrial membrane with NADH-ubiquinone oxidoreductase (complex I, CI) and cytochrome c oxidase (complex IV, CIV), resulting in different assemblies (supercomplex SCI(1)III(2)IV(1) and megacomplex MCI(2)III(2)IV(2)). Interacts with UQCC6. Interacts with STMP1.

The protein resides in the mitochondrion inner membrane. Functionally, component of the ubiquinol-cytochrome c oxidoreductase, a multisubunit transmembrane complex that is part of the mitochondrial electron transport chain which drives oxidative phosphorylation. The respiratory chain contains 3 multisubunit complexes succinate dehydrogenase (complex II, CII), ubiquinol-cytochrome c oxidoreductase (cytochrome b-c1 complex, complex III, CIII) and cytochrome c oxidase (complex IV, CIV), that cooperate to transfer electrons derived from NADH and succinate to molecular oxygen, creating an electrochemical gradient over the inner membrane that drives transmembrane transport and the ATP synthase. The cytochrome b-c1 complex catalyzes electron transfer from ubiquinol to cytochrome c, linking this redox reaction to translocation of protons across the mitochondrial inner membrane, with protons being carried across the membrane as hydrogens on the quinol. In the process called Q cycle, 2 protons are consumed from the matrix, 4 protons are released into the intermembrane space and 2 electrons are passed to cytochrome c. The 2 core subunits UQCRC1/QCR1 and UQCRC2/QCR2 are homologous to the 2 mitochondrial-processing peptidase (MPP) subunits beta-MPP and alpha-MPP respectively, and they seem to have preserved their MPP processing properties. May be involved in the in situ processing of UQCRFS1 into the mature Rieske protein and its mitochondrial targeting sequence (MTS)/subunit 9 when incorporated into complex III. Seems to play an important role in the maintenance of proper mitochondrial function in nigral dopaminergic neurons. In Bos taurus (Bovine), this protein is Cytochrome b-c1 complex subunit 1, mitochondrial (UQCRC1).